The following is a 325-amino-acid chain: Biotin synthase (325 aa).

Residues 42–270 (YKVQLASLLS…QSRVRLSAGR (229 aa)) enclose the Radical SAM core domain. [4Fe-4S] cluster is bound by residues Cys-57, Cys-61, and Cys-64. Residues Cys-101, Cys-133, Cys-193, and Arg-265 each coordinate [2Fe-2S] cluster.

It belongs to the radical SAM superfamily. Biotin synthase family. Homodimer. [4Fe-4S] cluster is required as a cofactor. [2Fe-2S] cluster serves as cofactor.

The catalysed reaction is (4R,5S)-dethiobiotin + (sulfur carrier)-SH + 2 reduced [2Fe-2S]-[ferredoxin] + 2 S-adenosyl-L-methionine = (sulfur carrier)-H + biotin + 2 5'-deoxyadenosine + 2 L-methionine + 2 oxidized [2Fe-2S]-[ferredoxin]. It functions in the pathway cofactor biosynthesis; biotin biosynthesis; biotin from 7,8-diaminononanoate: step 2/2. Catalyzes the conversion of dethiobiotin (DTB) to biotin by the insertion of a sulfur atom into dethiobiotin via a radical-based mechanism. The protein is Biotin synthase of Synechococcus sp. (strain WH7803).